A 329-amino-acid polypeptide reads, in one-letter code: Sulfate-binding protein (329 aa).

Residues 1-19 (MKKWGVGFTLLLASTSILA) form the signal peptide.

Belongs to the prokaryotic sulfate-binding protein family.

The protein resides in the periplasm. Functionally, this protein specifically binds sulfate and is involved in its transmembrane transport. The polypeptide is Sulfate-binding protein (sbp) (Salmonella typhimurium (strain LT2 / SGSC1412 / ATCC 700720)).